Consider the following 473-residue polypeptide: UDP-N-acetylmuramate--L-alanine ligase (473 aa).

119–125 (GTHGKTT) lines the ATP pocket.

The protein belongs to the MurCDEF family.

It is found in the cytoplasm. The catalysed reaction is UDP-N-acetyl-alpha-D-muramate + L-alanine + ATP = UDP-N-acetyl-alpha-D-muramoyl-L-alanine + ADP + phosphate + H(+). It participates in cell wall biogenesis; peptidoglycan biosynthesis. Cell wall formation. This is UDP-N-acetylmuramate--L-alanine ligase from Caulobacter vibrioides (strain NA1000 / CB15N) (Caulobacter crescentus).